Here is a 454-residue protein sequence, read N- to C-terminus: Protoheme IX farnesyltransferase 1 (454 aa).

The segment at 1–186 is unknown; the sequence is MRTTGFSGLL…AYFELTKPRL (186 aa). 4 helical membrane-spanning segments follow: residues 9–29, 59–79, 87–107, and 113–133; these read LLSA…TAAL, GVAA…WSET, LALA…VATG, and LHLF…AWHL. Residues 137–164 form a disordered region; it reads TGSDDAPESPPELAPPVDEEPAATEQPA. Transmembrane regions (helical) follow at residues 186–206, 209–229, 251–271, 276–296, 300–320, 321–341, 377–397, 398–418, and 433–453; these read LMWL…TPTV, VVFT…FNHV, VPVA…LWAF, LLAA…YTLI, NTVQ…LIGY, AAVT…IFLW, HIVF…AVTD, LGWL…WAVV, and FHAS…DSLA. The segment at 187 to 451 is protoheme IX prenyltransferase; sequence MWLLCLVAGA…LVLVAILIDS (265 aa).

The protein in the C-terminal section; belongs to the UbiA prenyltransferase family. Protoheme IX farnesyltransferase subfamily.

The protein localises to the cell membrane. The catalysed reaction is heme b + (2E,6E)-farnesyl diphosphate + H2O = Fe(II)-heme o + diphosphate. Its pathway is porphyrin-containing compound metabolism; heme O biosynthesis; heme O from protoheme: step 1/1. Converts heme B (protoheme IX) to heme O by substitution of the vinyl group on carbon 2 of heme B porphyrin ring with a hydroxyethyl farnesyl side group. The protein is Protoheme IX farnesyltransferase 1 (ctaB1) of Natronomonas pharaonis (strain ATCC 35678 / DSM 2160 / CIP 103997 / JCM 8858 / NBRC 14720 / NCIMB 2260 / Gabara) (Halobacterium pharaonis).